A 932-amino-acid polypeptide reads, in one-letter code: Protocadherin gamma-A12 (932 aa).

Residues 1–29 (MIPARLHRDYKGLVLLGILLGTLWETGCT) form the signal peptide. 6 consecutive Cadherin domains span residues 30–133 (QIRY…APYF), 134–242 (RESE…APAF), 243–347 (AQPE…APEV), 348–452 (VLTS…PPVF), 453–562 (PQAS…APEI), and 570–683 (DGST…SPAN). Residues 30–692 (QIRYSVPEEL…NSETSDLTLY (663 aa)) are Extracellular-facing. N-linked (GlcNAc...) asparagine glycans are attached at residues asparagine 265, asparagine 419, and asparagine 545. Residues 693–713 (LVVAVAAVSCVFLAFVILLLA) traverse the membrane as a helical segment. The Cytoplasmic segment spans residues 714–932 (LRLRRWHKSR…KKKSGKKEKK (219 aa)). 2 disordered regions span residues 803 to 841 (SHGLIEQAPPNTDWRFSQAQRPGTSGSQNGDDTGTWPNN) and 902 to 932 (ATLTNAAGKRDGKAPAGGNGNKKKSGKKEKK). Positions 816-841 (WRFSQAQRPGTSGSQNGDDTGTWPNN) are enriched in polar residues. The segment covering 922–932 (NKKKSGKKEKK) has biased composition (basic residues).

Its subcellular location is the cell membrane. Its function is as follows. Potential calcium-dependent cell-adhesion protein. May be involved in the establishment and maintenance of specific neuronal connections in the brain. This Homo sapiens (Human) protein is Protocadherin gamma-A12 (PCDHGA12).